A 124-amino-acid chain; its full sequence is Aspartate 1-decarboxylase (124 aa).

Residue S25 is the Schiff-base intermediate with substrate; via pyruvic acid of the active site. A Pyruvic acid (Ser) modification is found at S25. T57 lines the substrate pocket. The Proton donor role is filled by Y58. Residue 73-75 (GAA) participates in substrate binding.

This sequence belongs to the PanD family. As to quaternary structure, heterooctamer of four alpha and four beta subunits. Requires pyruvate as cofactor. Is synthesized initially as an inactive proenzyme, which is activated by self-cleavage at a specific serine bond to produce a beta-subunit with a hydroxyl group at its C-terminus and an alpha-subunit with a pyruvoyl group at its N-terminus.

The protein resides in the cytoplasm. The catalysed reaction is L-aspartate + H(+) = beta-alanine + CO2. Its pathway is cofactor biosynthesis; (R)-pantothenate biosynthesis; beta-alanine from L-aspartate: step 1/1. Catalyzes the pyruvoyl-dependent decarboxylation of aspartate to produce beta-alanine. The protein is Aspartate 1-decarboxylase of Clostridium beijerinckii (strain ATCC 51743 / NCIMB 8052) (Clostridium acetobutylicum).